The following is a 128-amino-acid chain: Small ribosomal subunit protein uS12 (128 aa).

The interval 1 to 24 (MPTFNQLVKYGREKRKKKSKAPAL) is disordered. Aspartate 89 carries the 3-methylthioaspartic acid modification. The segment at 105–128 (AGVEGRRQSRSKYGTKRPKEEKGG) is disordered.

The protein belongs to the universal ribosomal protein uS12 family. Part of the 30S ribosomal subunit. Contacts proteins S8 and S17. May interact with IF1 in the 30S initiation complex.

Its function is as follows. With S4 and S5 plays an important role in translational accuracy. Functionally, interacts with and stabilizes bases of the 16S rRNA that are involved in tRNA selection in the A site and with the mRNA backbone. Located at the interface of the 30S and 50S subunits, it traverses the body of the 30S subunit contacting proteins on the other side and probably holding the rRNA structure together. The combined cluster of proteins S8, S12 and S17 appears to hold together the shoulder and platform of the 30S subunit. This is Small ribosomal subunit protein uS12 from Aquifex aeolicus (strain VF5).